We begin with the raw amino-acid sequence, 222 residues long: tRNA (guanine-N(1)-)-methyltransferase (222 aa).

S-adenosyl-L-methionine is bound by residues G110 and I130–L135.

The protein belongs to the RNA methyltransferase TrmD family. Homodimer.

Its subcellular location is the cytoplasm. The enzyme catalyses guanosine(37) in tRNA + S-adenosyl-L-methionine = N(1)-methylguanosine(37) in tRNA + S-adenosyl-L-homocysteine + H(+). Specifically methylates guanosine-37 in various tRNAs. This is tRNA (guanine-N(1)-)-methyltransferase from Protochlamydia amoebophila (strain UWE25).